A 439-amino-acid chain; its full sequence is 23S rRNA (uracil(1939)-C(5))-methyltransferase RlmD (439 aa).

The TRAM domain occupies 10–68 (QKKLRAAFTTIVQDLDYQGLGVAKIQGKTWFIENALPQEQVQVQVIEEKRQYGLGRVQK). The [4Fe-4S] cluster site is built by C81, C87, C90, and C168. 6 residues coordinate S-adenosyl-L-methionine: Q271, F300, N305, E321, D348, and D369. C395 (nucleophile) is an active-site residue.

This sequence belongs to the class I-like SAM-binding methyltransferase superfamily. RNA M5U methyltransferase family. RlmD subfamily.

The enzyme catalyses uridine(1939) in 23S rRNA + S-adenosyl-L-methionine = 5-methyluridine(1939) in 23S rRNA + S-adenosyl-L-homocysteine + H(+). Its function is as follows. Catalyzes the formation of 5-methyl-uridine at position 1939 (m5U1939) in 23S rRNA. This is 23S rRNA (uracil(1939)-C(5))-methyltransferase RlmD from Histophilus somni (strain 129Pt) (Haemophilus somnus).